A 100-amino-acid polypeptide reads, in one-letter code: NADH-quinone oxidoreductase subunit K (100 aa).

Transmembrane regions (helical) follow at residues 4 to 24 (LSHA…AIIV), 29 to 49 (LFIL…FVIV), and 60 to 80 (IMYI…LALL).

It belongs to the complex I subunit 4L family. As to quaternary structure, NDH-1 is composed of 13 different subunits. Subunits NuoA, H, J, K, L, M, N constitute the membrane sector of the complex.

It is found in the cell inner membrane. The enzyme catalyses a quinone + NADH + 5 H(+)(in) = a quinol + NAD(+) + 4 H(+)(out). Its function is as follows. NDH-1 shuttles electrons from NADH, via FMN and iron-sulfur (Fe-S) centers, to quinones in the respiratory chain. The immediate electron acceptor for the enzyme in this species is believed to be ubiquinone. Couples the redox reaction to proton translocation (for every two electrons transferred, four hydrogen ions are translocated across the cytoplasmic membrane), and thus conserves the redox energy in a proton gradient. The polypeptide is NADH-quinone oxidoreductase subunit K (Blochmanniella pennsylvanica (strain BPEN)).